The sequence spans 492 residues: N-succinylglutamate 5-semialdehyde dehydrogenase (492 aa).

220–225 (GSANTG) lines the NAD(+) pocket. Catalysis depends on residues E243 and C277.

Belongs to the aldehyde dehydrogenase family. AstD subfamily.

The enzyme catalyses N-succinyl-L-glutamate 5-semialdehyde + NAD(+) + H2O = N-succinyl-L-glutamate + NADH + 2 H(+). The protein operates within amino-acid degradation; L-arginine degradation via AST pathway; L-glutamate and succinate from L-arginine: step 4/5. Its function is as follows. Catalyzes the NAD-dependent reduction of succinylglutamate semialdehyde into succinylglutamate. The protein is N-succinylglutamate 5-semialdehyde dehydrogenase of Escherichia coli (strain K12 / MC4100 / BW2952).